We begin with the raw amino-acid sequence, 338 residues long: Popeye domain-containing protein 1 (338 aa).

Residues methionine 1 to histidine 40 lie on the Extracellular side of the membrane. N-linked (GlcNAc...) asparagine glycans are attached at residues asparagine 21 and asparagine 29. Residues histidine 41–leucine 61 form a helical membrane-spanning segment. The Cytoplasmic portion of the chain corresponds to asparagine 62–methionine 65. A helical transmembrane segment spans residues isoleucine 66–phenylalanine 86. The Extracellular segment spans residues arginine 87–aspartate 91. The chain crosses the membrane as a helical span at residues isoleucine 92–tyrosine 112. Topologically, residues lysine 113 to cysteine 338 are cytoplasmic.

It belongs to the popeye family.

The protein localises to the lateral cell membrane. The protein resides in the cell junction. It localises to the tight junction. Its subcellular location is the membrane. It is found in the cell membrane. The protein localises to the sarcolemma. The protein resides in the caveola. Its function is as follows. Cell adhesion molecule involved in the establishment and/or maintenance of cell integrity. May play a role in vamp3-mediated vesicular transport and recycling of different receptor molecules. May be involved in the formation and regulation of the tight junction (TJ) paracellular permeability barrier in epithelial cells. May induce primordial adhesive contact and aggregation of epithelial cells in a Ca(2+)-independent manner. May be involved in epithelial movement during corneal sheet formation and regeneration. May play a role in the regulation of cell shape and movement by modulating the Rho-GTPase activity. May be involved in skeletal muscle and heart development as well as in the maintenance of heart function. May also be involved in striated muscle regeneration and in the regulation of cell spreading. The sequence is that of Popeye domain-containing protein 1 (popdc1) from Xenopus tropicalis (Western clawed frog).